Here is a 380-residue protein sequence, read N- to C-terminus: ATP phosphoribosyltransferase regulatory subunit (380 aa).

Belongs to the class-II aminoacyl-tRNA synthetase family. HisZ subfamily. Heteromultimer composed of HisG and HisZ subunits.

It is found in the cytoplasm. It functions in the pathway amino-acid biosynthesis; L-histidine biosynthesis; L-histidine from 5-phospho-alpha-D-ribose 1-diphosphate: step 1/9. In terms of biological role, required for the first step of histidine biosynthesis. May allow the feedback regulation of ATP phosphoribosyltransferase activity by histidine. The sequence is that of ATP phosphoribosyltransferase regulatory subunit from Thermoanaerobacter sp. (strain X514).